We begin with the raw amino-acid sequence, 558 residues long: Ankyrin repeat protein OPG189 (558 aa).

ANK repeat units follow at residues 65-95 (YGENILHIYSMDDANTNIIIFFLDRVLNINK), 169-205 (YGCTLLHRCIYHYKKSESESYNELIKILLNNGSDVDK), 209-239 (YGNTPFILLCKHDINNVELFEICLENANIDS), 243-272 (NRYTPLHYVSCRNKYDFVKLLISKGANVNA), 276-304 (FGTTPFYCGIIHGISLIKLYLESDTELEI), 339-368 (YNETSIYDAVSYNAYNTLVYLLNRNGDFET), and 372-401 (SGCTCISEAVANNNKIIMEVLLSKRPSLKI).

It belongs to the orthopoxvirus OPG189 protein family.

Functionally, contributes to viral release without involving rearrangement of host actin. The chain is Ankyrin repeat protein OPG189 (OPG189) from Homo sapiens (Human).